The chain runs to 84 residues: UPF0248 protein PF1300 (84 aa).

The protein belongs to the UPF0248 family.

The sequence is that of UPF0248 protein PF1300 from Pyrococcus furiosus (strain ATCC 43587 / DSM 3638 / JCM 8422 / Vc1).